The sequence spans 372 residues: ATP-sensitive inward rectifier potassium channel 1 (372 aa).

Topologically, residues 1–58 (MFKHLRRWFVTHIFGRSRQRARLVSKDGRCNIEFGNVDAQSRFIFFVDIWTTVLDLKW) are cytoplasmic. A Phosphoserine; by SGK1 modification is found at Ser-25. Residues 59–83 (RYKMTVFITAFLGSWFLFGLLWYVV) form a helical membrane-spanning segment. Topologically, residues 84-108 (AYVHKDLPEFYPPDNRTPCVENING) are extracellular. Asn-98 is a glycosylation site (N-linked (GlcNAc...) asparagine). The helical; Pore-forming intramembrane region spans 109–120 (MTSAFLFSLETQ). Positions 121 to 127 (VTIGYGF) form an intramembrane region, pore-forming. The short motif at 122–127 (TIGYGF) is the Selectivity filter element. Over 128–136 (RFVTEQCAT) the chain is Extracellular. The chain crosses the membrane as a helical span at residues 137–158 (AIFLLIFQSILGVIINSFMCGA). Topologically, residues 159-372 (ILAKISRPKK…EVDETDDTQM (214 aa)) are cytoplasmic. The segment at 161–188 (AKISRPKKRAKTITFSKNAVISKRGGKL) is polyphosphoinositide (PIP2)-binding. Position 204–211 (204–211 (GSHIYGKL)) interacts with ATP.

It belongs to the inward rectifier-type potassium channel (TC 1.A.2.1) family. KCNJ1 subfamily. In terms of assembly, interacts with SGK1 and SLC9A3R2/NHERF2. Phosphorylation at Ser-25 by SGK1 is necessary for its expression at the cell membrane.

The protein resides in the cell membrane. The catalysed reaction is K(+)(in) = K(+)(out). Its activity is regulated as follows. Inhibited by WNK3. Activated by phosphatidylinositol 4,5 biphosphate (PtdIns(4,5)P2). Inward rectifier potassium channels are characterized by a greater tendency to allow potassium to flow into the cell rather than out of it. Their voltage dependence is regulated by the concentration of extracellular potassium; as external potassium is raised, the voltage range of the channel opening shifts to more positive voltages. The inward rectification is mainly due to the blockage of outward current by internal magnesium. This channel is activated by internal ATP and can be blocked by external barium. In the kidney, probably plays a major role in potassium homeostasis. This Mus musculus (Mouse) protein is ATP-sensitive inward rectifier potassium channel 1 (Kcnj1).